Reading from the N-terminus, the 262-residue chain is Probable DNA polymerase sliding clamp 1 (262 aa).

The DNA-binding element occupies 67–86 (KCEHTYELGVNVLNMFKLLR).

Belongs to the PCNA family.

Sliding clamp subunit. Responsible for tethering the catalytic subunit of DNA polymerase to DNA during high-speed replication. The polypeptide is Probable DNA polymerase sliding clamp 1 (Chlorella (PBCV-1)).